Reading from the N-terminus, the 165-residue chain is Short form salivary protein D7R1 (165 aa).

The first 21 residues, 1–21, serve as a signal peptide directing secretion; the sequence is MFNKLHLVSLLACGLFVIAQA. Intrachain disulfides connect cysteine 27–cysteine 59, cysteine 40–cysteine 164, and cysteine 98–cysteine 117. Residues glutamate 28, histidine 56, tyrosine 115, aspartate 132, and glutamate 135 each coordinate serotonin. Residues tyrosine 115, aspartate 132, and glutamate 135 each coordinate histamine.

Belongs to the PBP/GOBP family. Female salivary gland. Not detected in female carcass without salivary glands. Not detected in male tissues.

Its subcellular location is the secreted. Functionally, modulates blood feeding of female mosquitoes on vertebrate species by binding and sequestering different mediators involved in the host response. Binds serotonin and histamine. Increases blood clotting time. The sequence is that of Short form salivary protein D7R1 from Anopheles gambiae (African malaria mosquito).